A 335-amino-acid chain; its full sequence is Beta-ketoacyl-[acyl-carrier-protein] synthase III 1 (335 aa).

Catalysis depends on residues C116 and H256. The ACP-binding stretch occupies residues 257-261 (QANQR). The active site involves N286.

This sequence belongs to the thiolase-like superfamily. FabH family. Homodimer.

The protein localises to the cytoplasm. The enzyme catalyses malonyl-[ACP] + acetyl-CoA + H(+) = 3-oxobutanoyl-[ACP] + CO2 + CoA. It participates in lipid metabolism; fatty acid biosynthesis. Catalyzes the condensation reaction of fatty acid synthesis by the addition to an acyl acceptor of two carbons from malonyl-ACP. Catalyzes the first condensation reaction which initiates fatty acid synthesis and may therefore play a role in governing the total rate of fatty acid production. Possesses both acetoacetyl-ACP synthase and acetyl transacylase activities. Its substrate specificity determines the biosynthesis of branched-chain and/or straight-chain of fatty acids. This Bacteroides thetaiotaomicron (strain ATCC 29148 / DSM 2079 / JCM 5827 / CCUG 10774 / NCTC 10582 / VPI-5482 / E50) protein is Beta-ketoacyl-[acyl-carrier-protein] synthase III 1.